Consider the following 130-residue polypeptide: Small ribosomal subunit protein uS9 (130 aa).

Belongs to the universal ribosomal protein uS9 family.

The polypeptide is Small ribosomal subunit protein uS9 (Edwardsiella ictaluri (strain 93-146)).